We begin with the raw amino-acid sequence, 510 residues long: Inositol-3-phosphate synthase 1 (510 aa).

Gly-70, Gly-71, Asn-72, Asn-73, Asp-143, Ile-180, Gln-190, Arg-193, Thr-230, Ala-231, Asn-232, Thr-233, Gly-281, Ser-282, Asp-306, Ser-309, Asn-340, Asn-341, Asp-342, Lys-355, Gly-393, Asp-394, Asp-422, and Ser-423 together coordinate NAD(+).

Belongs to the myo-inositol 1-phosphate synthase family. The cofactor is NAD(+).

The protein resides in the cytoplasm. Its subcellular location is the cytosol. It is found in the nucleus. It carries out the reaction D-glucose 6-phosphate = 1D-myo-inositol 3-phosphate. It functions in the pathway polyol metabolism; myo-inositol biosynthesis; myo-inositol from D-glucose 6-phosphate: step 1/2. Key enzyme in myo-inositol biosynthesis pathway that catalyzes the conversion of glucose 6-phosphate to 1-myo-inositol 1-phosphate in a NAD-dependent manner. May play a role in oxidative stress resistance and influences ascorbate levels. This Populus euphratica (Euphrates poplar) protein is Inositol-3-phosphate synthase 1.